The primary structure comprises 287 residues: Bifunctional protein FolD (287 aa).

Residues 171–173 (GHS) and Ile-237 each bind NADP(+).

The protein belongs to the tetrahydrofolate dehydrogenase/cyclohydrolase family. In terms of assembly, homodimer.

It catalyses the reaction (6R)-5,10-methylene-5,6,7,8-tetrahydrofolate + NADP(+) = (6R)-5,10-methenyltetrahydrofolate + NADPH. The catalysed reaction is (6R)-5,10-methenyltetrahydrofolate + H2O = (6R)-10-formyltetrahydrofolate + H(+). The protein operates within one-carbon metabolism; tetrahydrofolate interconversion. Its function is as follows. Catalyzes the oxidation of 5,10-methylenetetrahydrofolate to 5,10-methenyltetrahydrofolate and then the hydrolysis of 5,10-methenyltetrahydrofolate to 10-formyltetrahydrofolate. This is Bifunctional protein FolD from Methanosarcina barkeri (strain Fusaro / DSM 804).